The sequence spans 478 residues: Serine/threonine-protein phosphatase 2A activator 1 (478 aa).

The segment at 359-478 (DPSAIPPPSR…DITTKAPWAK (120 aa)) is disordered. Residues 396 to 419 (APWATASQSTPPPSTGTAAPWATS) show a composition bias toward low complexity.

The protein belongs to the PTPA-type PPIase family.

Its subcellular location is the cytoplasm. The protein resides in the nucleus. The catalysed reaction is [protein]-peptidylproline (omega=180) = [protein]-peptidylproline (omega=0). Its function is as follows. PPIases accelerate the folding of proteins. It catalyzes the cis-trans isomerization of proline imidic peptide bonds in oligopeptides. Acts as a regulatory subunit for PP2A-like phosphatases modulating their activity or substrate specificity, probably by inducing a conformational change in the catalytic subunit, a direct target of the PPIase. Can reactivate inactive phosphatase PP2A-phosphatase methylesterase complexes (PP2Ai) in presence of ATP and Mg(2+) by dissociating the inactive form from the complex. This is Serine/threonine-protein phosphatase 2A activator 1 (rrd1) from Aspergillus oryzae (strain ATCC 42149 / RIB 40) (Yellow koji mold).